A 934-amino-acid chain; its full sequence is Protein translocase subunit SecA (934 aa).

ATP is bound by residues Q90, 108 to 112 (GEGKT), and D509. The tract at residues 535-565 (PEEDHTPPVPLQRSAPGGFSDAAAPSLPRSG) is disordered.

It belongs to the SecA family. As to quaternary structure, monomer and homodimer. Part of the essential Sec protein translocation apparatus which comprises SecA, SecYEG and auxiliary proteins SecDF. Other proteins may also be involved.

It is found in the cell inner membrane. The protein localises to the cellular thylakoid membrane. It localises to the cytoplasm. It catalyses the reaction ATP + H2O + cellular proteinSide 1 = ADP + phosphate + cellular proteinSide 2.. Functionally, part of the Sec protein translocase complex. Interacts with the SecYEG preprotein conducting channel. Has a central role in coupling the hydrolysis of ATP to the transfer of proteins into and across the cell membrane, serving as an ATP-driven molecular motor driving the stepwise translocation of polypeptide chains across the membrane. Probably participates in protein translocation into and across both the cytoplasmic and thylakoid membranes in cyanobacterial cells. The chain is Protein translocase subunit SecA from Synechococcus sp. (strain CC9605).